The sequence spans 669 residues: Translation factor GUF1, mitochondrial (669 aa).

The transit peptide at 1-49 (MWTLAGQGWWRGRALAAWVTEAARKGLLWPHLAPARGTAAESRAPDRCY) directs the protein to the mitochondrion. A tr-type G domain is found at 66-247 (ENTRNFSIIA…AVIKRIPFPK (182 aa)). Residues 75-82 (AHVDHGKS), 140-144 (DTPGH), and 194-197 (NKID) contribute to the GTP site.

The protein belongs to the TRAFAC class translation factor GTPase superfamily. Classic translation factor GTPase family. LepA subfamily.

It localises to the mitochondrion inner membrane. The catalysed reaction is GTP + H2O = GDP + phosphate + H(+). Functionally, promotes mitochondrial protein synthesis. May act as a fidelity factor of the translation reaction, by catalyzing a one-codon backward translocation of tRNAs on improperly translocated ribosomes. Binds to mitochondrial ribosomes in a GTP-dependent manner. This chain is Translation factor GUF1, mitochondrial, found in Bos taurus (Bovine).